A 132-amino-acid chain; its full sequence is Small ribosomal subunit protein uS12 (132 aa).

3-methylthioaspartic acid is present on aspartate 89.

Belongs to the universal ribosomal protein uS12 family. Part of the 30S ribosomal subunit. Contacts proteins S8 and S17. May interact with IF1 in the 30S initiation complex.

In terms of biological role, with S4 and S5 plays an important role in translational accuracy. Its function is as follows. Interacts with and stabilizes bases of the 16S rRNA that are involved in tRNA selection in the A site and with the mRNA backbone. Located at the interface of the 30S and 50S subunits, it traverses the body of the 30S subunit contacting proteins on the other side and probably holding the rRNA structure together. The combined cluster of proteins S8, S12 and S17 appears to hold together the shoulder and platform of the 30S subunit. This Campylobacter curvus (strain 525.92) protein is Small ribosomal subunit protein uS12.